Here is a 329-residue protein sequence, read N- to C-terminus: Anthranilate phosphoribosyltransferase (329 aa).

5-phospho-alpha-D-ribose 1-diphosphate-binding positions include Gly78, 81–82 (GD), 88–91 (NLST), 106–114 (KHGNRAASS), and Ser118. Gly78 serves as a coordination point for anthranilate. Ser90 lines the Mg(2+) pocket. Residue Asn109 participates in anthranilate binding. Arg164 lines the anthranilate pocket. Mg(2+)-binding residues include Asp221 and Glu222.

It belongs to the anthranilate phosphoribosyltransferase family. As to quaternary structure, homodimer. Mg(2+) serves as cofactor.

It carries out the reaction N-(5-phospho-beta-D-ribosyl)anthranilate + diphosphate = 5-phospho-alpha-D-ribose 1-diphosphate + anthranilate. The protein operates within amino-acid biosynthesis; L-tryptophan biosynthesis; L-tryptophan from chorismate: step 2/5. In terms of biological role, catalyzes the transfer of the phosphoribosyl group of 5-phosphorylribose-1-pyrophosphate (PRPP) to anthranilate to yield N-(5'-phosphoribosyl)-anthranilate (PRA). This chain is Anthranilate phosphoribosyltransferase, found in Thermus thermophilus (strain ATCC BAA-163 / DSM 7039 / HB27).